Reading from the N-terminus, the 400-residue chain is Enoyl-[acyl-carrier-protein] reductase [NADH] (400 aa).

NAD(+) is bound by residues 48–53, 74–75, 111–112, and 139–140; these read GASTGY, FE, DA, and LA. Y225 lines the substrate pocket. Y235 serves as the catalytic Proton donor. NAD(+)-binding positions include K244 and 273 to 275; that span reads VVT.

This sequence belongs to the TER reductase family. Monomer.

It carries out the reaction a 2,3-saturated acyl-[ACP] + NAD(+) = a (2E)-enoyl-[ACP] + NADH + H(+). It functions in the pathway lipid metabolism; fatty acid biosynthesis. Functionally, involved in the final reduction of the elongation cycle of fatty acid synthesis (FAS II). Catalyzes the reduction of a carbon-carbon double bond in an enoyl moiety that is covalently linked to an acyl carrier protein (ACP). The polypeptide is Enoyl-[acyl-carrier-protein] reductase [NADH] (Burkholderia ambifaria (strain MC40-6)).